A 251-amino-acid polypeptide reads, in one-letter code: Ubiquinone/menaquinone biosynthesis C-methyltransferase UbiE (251 aa).

S-adenosyl-L-methionine contacts are provided by residues Thr-74, Asp-95, and 123–124 (NA).

It belongs to the class I-like SAM-binding methyltransferase superfamily. MenG/UbiE family.

It catalyses the reaction a 2-demethylmenaquinol + S-adenosyl-L-methionine = a menaquinol + S-adenosyl-L-homocysteine + H(+). The enzyme catalyses a 2-methoxy-6-(all-trans-polyprenyl)benzene-1,4-diol + S-adenosyl-L-methionine = a 5-methoxy-2-methyl-3-(all-trans-polyprenyl)benzene-1,4-diol + S-adenosyl-L-homocysteine + H(+). Its pathway is quinol/quinone metabolism; menaquinone biosynthesis; menaquinol from 1,4-dihydroxy-2-naphthoate: step 2/2. The protein operates within cofactor biosynthesis; ubiquinone biosynthesis. Functionally, methyltransferase required for the conversion of demethylmenaquinol (DMKH2) to menaquinol (MKH2) and the conversion of 2-polyprenyl-6-methoxy-1,4-benzoquinol (DDMQH2) to 2-polyprenyl-3-methyl-6-methoxy-1,4-benzoquinol (DMQH2). The polypeptide is Ubiquinone/menaquinone biosynthesis C-methyltransferase UbiE (Shewanella piezotolerans (strain WP3 / JCM 13877)).